The primary structure comprises 86 residues: Large ribosomal subunit protein eL20 (86 aa).

This sequence belongs to the eukaryotic ribosomal protein eL20 family. In terms of assembly, part of the 50S ribosomal subunit. Binds 23S rRNA.

This chain is Large ribosomal subunit protein eL20, found in Sulfolobus acidocaldarius (strain ATCC 33909 / DSM 639 / JCM 8929 / NBRC 15157 / NCIMB 11770).